Here is a 351-residue protein sequence, read N- to C-terminus: Aromatic amino acid aminotransferase (351 aa).

The residue at position 215 (lysine 215) is an N6-(pyridoxal phosphate)lysine.

The protein belongs to the class-II pyridoxal-phosphate-dependent aminotransferase family. As to quaternary structure, homodimer. The cofactor is pyridoxal 5'-phosphate.

The catalysed reaction is an aromatic L-alpha-amino acid + 2-oxoglutarate = an aromatic oxo-acid + L-glutamate. Aminotransferase that catalyzes the conversion of aromatic amino acids and 2-oxoglutarate into corresponding aromatic oxo acids and L-glutamate. This is Aromatic amino acid aminotransferase from Mycolicibacterium vanbaalenii (strain DSM 7251 / JCM 13017 / BCRC 16820 / KCTC 9966 / NRRL B-24157 / PYR-1) (Mycobacterium vanbaalenii).